The chain runs to 388 residues: S-adenosylmethionine synthase (388 aa).

His-16 is an ATP binding site. Mg(2+) is bound at residue Asp-18. Glu-44 contacts K(+). 2 residues coordinate L-methionine: Glu-57 and Gln-100. The tract at residues 100-110 (QSPDIAQGVDK) is flexible loop. Residues 167 to 169 (DAK), 233 to 234 (RF), Asp-242, 248 to 249 (RK), Ala-265, and Lys-269 contribute to the ATP site. Asp-242 provides a ligand contact to L-methionine. Lys-273 contacts L-methionine.

This sequence belongs to the AdoMet synthase family. In terms of assembly, homotetramer; dimer of dimers. The cofactor is Mg(2+). K(+) serves as cofactor.

It is found in the cytoplasm. The catalysed reaction is L-methionine + ATP + H2O = S-adenosyl-L-methionine + phosphate + diphosphate. It participates in amino-acid biosynthesis; S-adenosyl-L-methionine biosynthesis; S-adenosyl-L-methionine from L-methionine: step 1/1. Functionally, catalyzes the formation of S-adenosylmethionine (AdoMet) from methionine and ATP. The overall synthetic reaction is composed of two sequential steps, AdoMet formation and the subsequent tripolyphosphate hydrolysis which occurs prior to release of AdoMet from the enzyme. In Polynucleobacter asymbioticus (strain DSM 18221 / CIP 109841 / QLW-P1DMWA-1) (Polynucleobacter necessarius subsp. asymbioticus), this protein is S-adenosylmethionine synthase.